We begin with the raw amino-acid sequence, 114 residues long: FK506-binding protein 1 (114 aa).

In terms of domain architecture, PPIase FKBP-type spans 26–114 (GDLVTIHYTG…IFDVELLKVN (89 aa)).

Belongs to the FKBP-type PPIase family. FKBP1 subfamily.

The protein localises to the cytoplasm. The catalysed reaction is [protein]-peptidylproline (omega=180) = [protein]-peptidylproline (omega=0). Its activity is regulated as follows. Inhibited by both FK506 and rapamycin. Its function is as follows. PPIases accelerate the folding of proteins. It catalyzes the cis-trans isomerization of proline imidic peptide bonds in oligopeptides. This chain is FK506-binding protein 1 (FPR1), found in Candida glabrata (strain ATCC 2001 / BCRC 20586 / JCM 3761 / NBRC 0622 / NRRL Y-65 / CBS 138) (Yeast).